We begin with the raw amino-acid sequence, 299 residues long: tRNA dimethylallyltransferase (299 aa).

10–17 (GPTAVGKT) serves as a coordination point for ATP. Substrate is bound at residue 12–17 (TAVGKT). Residues 35 to 38 (DSQQ) are interaction with substrate tRNA.

The protein belongs to the IPP transferase family. Monomer. Mg(2+) is required as a cofactor.

The enzyme catalyses adenosine(37) in tRNA + dimethylallyl diphosphate = N(6)-dimethylallyladenosine(37) in tRNA + diphosphate. In terms of biological role, catalyzes the transfer of a dimethylallyl group onto the adenine at position 37 in tRNAs that read codons beginning with uridine, leading to the formation of N6-(dimethylallyl)adenosine (i(6)A). This Streptococcus thermophilus (strain ATCC BAA-250 / LMG 18311) protein is tRNA dimethylallyltransferase.